Reading from the N-terminus, the 261-residue chain is Anamorsin homolog (261 aa).

Residues 4–134 form an N-terminal SAM-like domain region; sequence VQENNQVLYI…EIGSAAKLSL (131 aa). The segment at 134–173 is linker; it reads LGGGANKAKVAAVWKLDVDDDGEAEERIDEDELLDEEDKV. [2Fe-2S] cluster contacts are provided by C183, C192, C195, and C197. The segment at 183–197 is fe-S binding site A; it reads CGTTGKRKACKDCSC. The [4Fe-4S] cluster site is built by C222, C225, C233, and C236. Short sequence motifs (cx2C motif) lie at residues 222 to 225 and 233 to 236; these read CGSC and CATC. Residues 222–236 are fe-S binding site B; that stretch reads CGSCYLGDAFRCATC.

This sequence belongs to the anamorsin family. As to quaternary structure, monomer. Requires [2Fe-2S] cluster as cofactor. [4Fe-4S] cluster serves as cofactor.

Its subcellular location is the cytoplasm. It is found in the mitochondrion intermembrane space. Its function is as follows. Component of the cytosolic iron-sulfur (Fe-S) protein assembly (CIA) machinery. Required for the maturation of extramitochondrial Fe-S proteins. Part of an electron transfer chain functioning in an early step of cytosolic Fe-S biogenesis, facilitating the de novo assembly of a [4Fe-4S] cluster on the cytosolic Fe-S scaffold complex. Electrons are transferred from NADPH via a FAD- and FMN-containing diflavin oxidoreductase. Together with the diflavin oxidoreductase, also required for the assembly of the diferric tyrosyl radical cofactor of ribonucleotide reductase (RNR), probably by providing electrons for reduction during radical cofactor maturation in the catalytic small subunit. The polypeptide is Anamorsin homolog (Culex quinquefasciatus (Southern house mosquito)).